The following is a 314-amino-acid chain: BTB/POZ domain-containing protein KCTD17 (314 aa).

In terms of domain architecture, BTB spans K24 to K94. Residues S190 to L268 form a disordered region. Positions S196–Q239 form a coiled coil. The segment covering E208 to V225 has biased composition (acidic residues).

In terms of assembly, homopentamer; forms a closed pentamer. Interacts with CUL3; interaction is direct and forms a 5:5 heterodecamer. Interacts with TCHP. Interacts with CUL3, as part of the BCR(KCTD17) E3 ubiquitin ligase complex, at least composed of CUL3, KCTD17 and RBX1. In terms of tissue distribution, highly expressed in brain. Highest expression is observed in the putamen and the thalamus.

Its subcellular location is the cytoplasm. Substrate-adapter for CUL3-RING ubiquitin ligase complexes which mediates the ubiquitination and subsequent proteasomal degradation of TCHP, a protein involved in ciliogenesis down-regulation. Thereby, positively regulates ciliogenesis, playing a crucial role in the initial steps of axoneme extension. May also play a role in endoplasmic reticulum calcium ion homeostasis. The polypeptide is BTB/POZ domain-containing protein KCTD17 (Homo sapiens (Human)).